The primary structure comprises 126 residues: UPF0102 protein BH12350 (126 aa).

This sequence belongs to the UPF0102 family.

The polypeptide is UPF0102 protein BH12350 (Bartonella henselae (strain ATCC 49882 / DSM 28221 / CCUG 30454 / Houston 1) (Rochalimaea henselae)).